The primary structure comprises 337 residues: MVNFGLNSASILGIFLAVAGAGLYFLRSVRPEVSRDYDIFFSAVGLLCGLILLFQGWRLDPILQFGQLLLSGSTVFFAAETIRLRGITTEQARRSAPYADDRRVSKTRVYTEAELDQLEPEDEPVARNNRRLRGYDDDARSGRPDGYGEAEARPRPRSQGRNAPPTNPNPRPTRSRPSAGRSAPQRPGPAPGYNDNYGYEDDYSGWESGANDVWDDPTPSRRPPTRRPRPEAGNDPAPSRRPRPSNNPPNDSFGDRPERNAPRNARPYEDEPPAAYVDYQPIDEADLTPRPTTPEDPADRNQEQSRSGNPRSQRPSRSPVDGEEPPIGADDQERFDY.

The disordered stretch occupies residues T111–Y337. A compositionally biased stretch (acidic residues) spans A113–E123. Composition is skewed to basic and acidic residues over residues R133–R143 and F253–E269. The span at Q304–S316 shows a compositional bias: polar residues.

The protein belongs to the ycf66 family.

This Synechocystis sp. (strain ATCC 27184 / PCC 6803 / Kazusa) protein is Ycf66-like protein.